The primary structure comprises 212 residues: ATP-dependent dethiobiotin synthetase BioD (212 aa).

Asp-12–Phe-17 lines the ATP pocket. Residue Thr-16 coordinates Mg(2+). Lys-33 is a catalytic residue. A substrate-binding site is contributed by Ser-37. ATP-binding positions include Asp-50, Glu-110–Gly-113, and Asn-170–Cys-171. Mg(2+)-binding residues include Asp-50 and Glu-110.

This sequence belongs to the dethiobiotin synthetase family. Homodimer. The cofactor is Mg(2+).

It localises to the cytoplasm. It catalyses the reaction (7R,8S)-7,8-diammoniononanoate + CO2 + ATP = (4R,5S)-dethiobiotin + ADP + phosphate + 3 H(+). It participates in cofactor biosynthesis; biotin biosynthesis; biotin from 7,8-diaminononanoate: step 1/2. Catalyzes a mechanistically unusual reaction, the ATP-dependent insertion of CO2 between the N7 and N8 nitrogen atoms of 7,8-diaminopelargonic acid (DAPA, also called 7,8-diammoniononanoate) to form a ureido ring. In Legionella pneumophila (strain Paris), this protein is ATP-dependent dethiobiotin synthetase BioD.